A 203-amino-acid chain; its full sequence is Glycerol-3-phosphate acyltransferase (203 aa).

4 consecutive transmembrane segments (helical) span residues 6–26 (LTLL…AVLV), 82–102 (AISL…PIFF), 118–138 (APIG…LVLI), and 141–161 (YSSL…WWLD).

This sequence belongs to the PlsY family. Probably interacts with PlsX.

The protein localises to the cell inner membrane. The enzyme catalyses an acyl phosphate + sn-glycerol 3-phosphate = a 1-acyl-sn-glycero-3-phosphate + phosphate. The protein operates within lipid metabolism; phospholipid metabolism. Its function is as follows. Catalyzes the transfer of an acyl group from acyl-phosphate (acyl-PO(4)) to glycerol-3-phosphate (G3P) to form lysophosphatidic acid (LPA). This enzyme utilizes acyl-phosphate as fatty acyl donor, but not acyl-CoA or acyl-ACP. In Shewanella sp. (strain MR-7), this protein is Glycerol-3-phosphate acyltransferase.